Here is a 148-residue protein sequence, read N- to C-terminus: Nucleoside diphosphate kinase (148 aa).

Lysine 9, phenylalanine 57, arginine 85, threonine 91, arginine 102, and asparagine 112 together coordinate ATP. Phosphothreonine is present on threonine 91. Histidine 115 functions as the Pros-phosphohistidine intermediate in the catalytic mechanism. Residue serine 122 is modified to Phosphoserine.

It belongs to the NDK family. As to quaternary structure, homotetramer. The cofactor is Mg(2+).

The protein localises to the cytoplasm. The catalysed reaction is a 2'-deoxyribonucleoside 5'-diphosphate + ATP = a 2'-deoxyribonucleoside 5'-triphosphate + ADP. The enzyme catalyses a ribonucleoside 5'-diphosphate + ATP = a ribonucleoside 5'-triphosphate + ADP. Its function is as follows. Major role in the synthesis of nucleoside triphosphates other than ATP. The ATP gamma phosphate is transferred to the NDP beta phosphate via a ping-pong mechanism, using a phosphorylated active-site intermediate. The polypeptide is Nucleoside diphosphate kinase (Bacillus cereus (strain ATCC 14579 / DSM 31 / CCUG 7414 / JCM 2152 / NBRC 15305 / NCIMB 9373 / NCTC 2599 / NRRL B-3711)).